A 350-amino-acid polypeptide reads, in one-letter code: GTPase Obg (350 aa).

The Obg domain occupies 1–159 (MKLVDEAEIE…RTLKLELKLL (159 aa)). A disordered region spans residues 126-147 (GNMHFKSSTNRSPRQALPGEPG). In terms of domain architecture, OBG-type G spans 160-337 (ADVGLLGFPN…IMSRIMAFFD (178 aa)). GTP is bound by residues 166-173 (GFPNAGKS), 191-195 (FTTLY), 213-216 (DIPG), 287-290 (NKAD), and 318-320 (SAL). The Mg(2+) site is built by serine 173 and threonine 193.

The protein belongs to the TRAFAC class OBG-HflX-like GTPase superfamily. OBG GTPase family. In terms of assembly, monomer. Mg(2+) serves as cofactor.

It localises to the cytoplasm. An essential GTPase which binds GTP, GDP and possibly (p)ppGpp with moderate affinity, with high nucleotide exchange rates and a fairly low GTP hydrolysis rate. Plays a role in control of the cell cycle, stress response, ribosome biogenesis and in those bacteria that undergo differentiation, in morphogenesis control. The chain is GTPase Obg from Stenotrophomonas maltophilia (strain K279a).